Consider the following 627-residue polypeptide: (R)-linalool synthase, chloroplastic (627 aa).

A chloroplast-targeting transit peptide spans 1–21; it reads MAFVSIAPLASRCCVHKSFVS. Residues D378, D382, and E530 each contribute to the Mg(2+) site. The short motif at 378-382 is the DDXXD motif element; it reads DDIYD.

This sequence belongs to the terpene synthase family. Tpsd subfamily. Mg(2+) is required as a cofactor. Requires Mn(2+) as cofactor.

It is found in the plastid. Its subcellular location is the chloroplast. It catalyses the reaction (2E)-geranyl diphosphate + H2O = (R)-linalool + diphosphate. It functions in the pathway terpene metabolism; oleoresin biosynthesis. Functionally, terpene synthase (TPS) involved in the biosynthesis of monoterpene natural products included in conifer oleoresin secretions and volatile emissions; these compounds contribute to biotic and abiotic stress defense against herbivores and pathogens. Catalyzes the conversion of (2E)-geranyl diphosphate (GPP) to (R)-linalool. The sequence is that of (R)-linalool synthase, chloroplastic from Picea glauca (White spruce).